Here is a 538-residue protein sequence, read N- to C-terminus: Bifunctional purine biosynthesis protein PurH (538 aa).

Positions 6 to 158 (KHIPAPDLHR…KNHAYVATVV (153 aa)) constitute an MGS-like domain.

This sequence belongs to the PurH family.

It carries out the reaction (6R)-10-formyltetrahydrofolate + 5-amino-1-(5-phospho-beta-D-ribosyl)imidazole-4-carboxamide = 5-formamido-1-(5-phospho-D-ribosyl)imidazole-4-carboxamide + (6S)-5,6,7,8-tetrahydrofolate. It catalyses the reaction IMP + H2O = 5-formamido-1-(5-phospho-D-ribosyl)imidazole-4-carboxamide. It participates in purine metabolism; IMP biosynthesis via de novo pathway; 5-formamido-1-(5-phospho-D-ribosyl)imidazole-4-carboxamide from 5-amino-1-(5-phospho-D-ribosyl)imidazole-4-carboxamide (10-formyl THF route): step 1/1. The protein operates within purine metabolism; IMP biosynthesis via de novo pathway; IMP from 5-formamido-1-(5-phospho-D-ribosyl)imidazole-4-carboxamide: step 1/1. The polypeptide is Bifunctional purine biosynthesis protein PurH (Brucella abortus (strain S19)).